The primary structure comprises 389 residues: Putative glutamate--cysteine ligase 2 (389 aa).

This sequence belongs to the glutamate--cysteine ligase type 2 family. YbdK subfamily.

The catalysed reaction is L-cysteine + L-glutamate + ATP = gamma-L-glutamyl-L-cysteine + ADP + phosphate + H(+). Functionally, ATP-dependent carboxylate-amine ligase which exhibits weak glutamate--cysteine ligase activity. This is Putative glutamate--cysteine ligase 2 from Rhodospirillum rubrum (strain ATCC 11170 / ATH 1.1.1 / DSM 467 / LMG 4362 / NCIMB 8255 / S1).